A 358-amino-acid chain; its full sequence is Heat-inducible transcription repressor HrcA (358 aa).

The protein belongs to the HrcA family.

Functionally, negative regulator of class I heat shock genes (grpE-dnaK-dnaJ and groELS operons). Prevents heat-shock induction of these operons. The chain is Heat-inducible transcription repressor HrcA from Caulobacter vibrioides (strain NA1000 / CB15N) (Caulobacter crescentus).